Here is a 492-residue protein sequence, read N- to C-terminus: Glutamyl-tRNA(Gln) amidotransferase subunit A (492 aa).

Catalysis depends on charge relay system residues Lys79 and Ser154. Catalysis depends on Ser178, which acts as the Acyl-ester intermediate.

The protein belongs to the amidase family. GatA subfamily. In terms of assembly, heterotrimer of A, B and C subunits.

It carries out the reaction L-glutamyl-tRNA(Gln) + L-glutamine + ATP + H2O = L-glutaminyl-tRNA(Gln) + L-glutamate + ADP + phosphate + H(+). Its function is as follows. Allows the formation of correctly charged Gln-tRNA(Gln) through the transamidation of misacylated Glu-tRNA(Gln) in organisms which lack glutaminyl-tRNA synthetase. The reaction takes place in the presence of glutamine and ATP through an activated gamma-phospho-Glu-tRNA(Gln). This is Glutamyl-tRNA(Gln) amidotransferase subunit A from Acinetobacter baumannii (strain ATCC 17978 / DSM 105126 / CIP 53.77 / LMG 1025 / NCDC KC755 / 5377).